A 126-amino-acid polypeptide reads, in one-letter code: Holo-[acyl-carrier-protein] synthase (126 aa).

Residues aspartate 9 and glutamate 58 each contribute to the Mg(2+) site.

Belongs to the P-Pant transferase superfamily. AcpS family. The cofactor is Mg(2+).

It localises to the cytoplasm. It carries out the reaction apo-[ACP] + CoA = holo-[ACP] + adenosine 3',5'-bisphosphate + H(+). In terms of biological role, transfers the 4'-phosphopantetheine moiety from coenzyme A to a Ser of acyl-carrier-protein. The polypeptide is Holo-[acyl-carrier-protein] synthase (Vibrio vulnificus (strain CMCP6)).